A 267-amino-acid polypeptide reads, in one-letter code: 4-hydroxy-tetrahydrodipicolinate reductase (267 aa).

NAD(+) contacts are provided by residues 9-14 (GASGRM) and Asp35. Arg36 provides a ligand contact to NADP(+). NAD(+)-binding positions include 98-100 (GTT) and 122-125 (ASNF). His155 serves as the catalytic Proton donor/acceptor. Residue His156 participates in (S)-2,3,4,5-tetrahydrodipicolinate binding. The active-site Proton donor is the Lys159. 165–166 (GT) provides a ligand contact to (S)-2,3,4,5-tetrahydrodipicolinate.

This sequence belongs to the DapB family.

It localises to the cytoplasm. It catalyses the reaction (S)-2,3,4,5-tetrahydrodipicolinate + NAD(+) + H2O = (2S,4S)-4-hydroxy-2,3,4,5-tetrahydrodipicolinate + NADH + H(+). It carries out the reaction (S)-2,3,4,5-tetrahydrodipicolinate + NADP(+) + H2O = (2S,4S)-4-hydroxy-2,3,4,5-tetrahydrodipicolinate + NADPH + H(+). The protein operates within amino-acid biosynthesis; L-lysine biosynthesis via DAP pathway; (S)-tetrahydrodipicolinate from L-aspartate: step 4/4. Catalyzes the conversion of 4-hydroxy-tetrahydrodipicolinate (HTPA) to tetrahydrodipicolinate. The sequence is that of 4-hydroxy-tetrahydrodipicolinate reductase from Chromobacterium violaceum (strain ATCC 12472 / DSM 30191 / JCM 1249 / CCUG 213 / NBRC 12614 / NCIMB 9131 / NCTC 9757 / MK).